The sequence spans 75 residues: MKLLLFTALVLVVISLVEVEAENERACIPLEKECTKTPGNCCSGLRCDCYRRFEQGVAKGTQCWCIEKDVTYKGV.

An N-terminal signal peptide occupies residues 1–21; that stretch reads MKLLLFTALVLVVISLVEVEA. Residues 22-25 constitute a propeptide that is removed on maturation; it reads ENER.

This sequence belongs to the neurotoxin 19 (CSTX) family. 06 (U6-Lctx) subfamily. Post-translationally, contains 4 disulfide bonds. Expressed by the venom gland.

It is found in the secreted. The protein is U6-lycotoxin-Ls1f of Lycosa singoriensis (Wolf spider).